The sequence spans 219 residues: Probable nicotinate-nucleotide adenylyltransferase (219 aa).

It belongs to the NadD family.

The enzyme catalyses nicotinate beta-D-ribonucleotide + ATP + H(+) = deamido-NAD(+) + diphosphate. Its pathway is cofactor biosynthesis; NAD(+) biosynthesis; deamido-NAD(+) from nicotinate D-ribonucleotide: step 1/1. In terms of biological role, catalyzes the reversible adenylation of nicotinate mononucleotide (NaMN) to nicotinic acid adenine dinucleotide (NaAD). This is Probable nicotinate-nucleotide adenylyltransferase from Pseudomonas entomophila (strain L48).